A 350-amino-acid chain; its full sequence is Ion-translocating oxidoreductase complex subunit D (350 aa).

Helical transmembrane passes span 19 to 39 (LMLL…WFFG), 41 to 61 (GTLI…ALVL), 67 to 87 (PVKP…IGLS), 88 to 108 (LPPL…IIIA), and 122 to 142 (PAMV…TSWL). Residue Thr-186 is modified to FMN phosphoryl threonine. Transmembrane regions (helical) follow at residues 213-233 (WGGI…LFLL), 242-262 (IPGA…LMTP), 264-284 (ATAT…AFFI), and 299-316 (LVYG…RRFG).

It belongs to the NqrB/RnfD family. As to quaternary structure, the complex is composed of six subunits: RnfA, RnfB, RnfC, RnfD, RnfE and RnfG. FMN serves as cofactor.

It is found in the cell inner membrane. Functionally, part of a membrane-bound complex that couples electron transfer with translocation of ions across the membrane. The sequence is that of Ion-translocating oxidoreductase complex subunit D from Aeromonas hydrophila subsp. hydrophila (strain ATCC 7966 / DSM 30187 / BCRC 13018 / CCUG 14551 / JCM 1027 / KCTC 2358 / NCIMB 9240 / NCTC 8049).